We begin with the raw amino-acid sequence, 369 residues long: Chaperone protein DnaJ (369 aa).

Residues Ser-4–Gly-69 form the J domain. The CR-type zinc finger occupies Gly-130–Asp-207. Zn(2+) is bound by residues Cys-143, Cys-146, Cys-159, Cys-162, Cys-181, Cys-184, Cys-195, and Cys-198. CXXCXGXG motif repeat units follow at residues Cys-143 to Gly-150, Cys-159 to Gly-166, Cys-181 to Gly-188, and Cys-195 to Thr-202.

Belongs to the DnaJ family. Homodimer. The cofactor is Zn(2+).

The protein localises to the cytoplasm. Functionally, participates actively in the response to hyperosmotic and heat shock by preventing the aggregation of stress-denatured proteins and by disaggregating proteins, also in an autonomous, DnaK-independent fashion. Unfolded proteins bind initially to DnaJ; upon interaction with the DnaJ-bound protein, DnaK hydrolyzes its bound ATP, resulting in the formation of a stable complex. GrpE releases ADP from DnaK; ATP binding to DnaK triggers the release of the substrate protein, thus completing the reaction cycle. Several rounds of ATP-dependent interactions between DnaJ, DnaK and GrpE are required for fully efficient folding. Also involved, together with DnaK and GrpE, in the DNA replication of plasmids through activation of initiation proteins. The sequence is that of Chaperone protein DnaJ from Helicobacter pylori (strain ATCC 700392 / 26695) (Campylobacter pylori).